A 406-amino-acid chain; its full sequence is Multifunctional CCA protein (406 aa).

2 residues coordinate ATP: G8 and R11. Positions 8 and 11 each coordinate CTP. Mg(2+)-binding residues include D21 and D23. R91, R137, and R140 together coordinate ATP. Residues R91, R137, and R140 each coordinate CTP. The region spanning T228–W329 is the HD domain.

It belongs to the tRNA nucleotidyltransferase/poly(A) polymerase family. Bacterial CCA-adding enzyme type 1 subfamily. As to quaternary structure, monomer. Can also form homodimers and oligomers. Mg(2+) is required as a cofactor. It depends on Ni(2+) as a cofactor.

The catalysed reaction is a tRNA precursor + 2 CTP + ATP = a tRNA with a 3' CCA end + 3 diphosphate. It carries out the reaction a tRNA with a 3' CCA end + 2 CTP + ATP = a tRNA with a 3' CCACCA end + 3 diphosphate. Catalyzes the addition and repair of the essential 3'-terminal CCA sequence in tRNAs without using a nucleic acid template. Adds these three nucleotides in the order of C, C, and A to the tRNA nucleotide-73, using CTP and ATP as substrates and producing inorganic pyrophosphate. tRNA 3'-terminal CCA addition is required both for tRNA processing and repair. Also involved in tRNA surveillance by mediating tandem CCA addition to generate a CCACCA at the 3' terminus of unstable tRNAs. While stable tRNAs receive only 3'-terminal CCA, unstable tRNAs are marked with CCACCA and rapidly degraded. The protein is Multifunctional CCA protein of Vibrio parahaemolyticus serotype O3:K6 (strain RIMD 2210633).